The following is a 199-amino-acid chain: Protein ZNRD2 (199 aa).

Residue Ala-2 is modified to N-acetylalanine. Residues Cys-53, Cys-56, Cys-70, and Cys-73 each contribute to the Zn(2+) site. Position 94 is a phosphoserine (Ser-94). A disordered region spans residues Gln-100–Cys-125. The Nuclear export signal motif lies at Ser-173–Leu-194.

Homodimer. The cofactor is Zn(2+).

The protein resides in the cytoplasm. Might play a role in mitosis. Antigenic molecule. Could be a centromere-associated protein. May induce anti-centromere antibodies. In Homo sapiens (Human), this protein is Protein ZNRD2.